The chain runs to 711 residues: Cyclomaltodextrin glucanotransferase (711 aa).

A signal peptide spans 1-31; sequence MRRWLSLVLSMSFVFSAIFIVSDTQKVTVEA. Positions 32-165 are A1; that stretch reads AGNLNKVNFT…GIKVIIDFAP (134 aa). Residues D55, N57, N60, and N61 each contribute to the Ca(2+) site. C71 and C78 are joined by a disulfide. G79 and D81 together coordinate Ca(2+). A substrate-binding site is contributed by 127 to 128; it reads YW. N166 contacts Ca(2+). Residues 166-229 form a b region; that stretch reads NHTSPASETN…NLFDLADLNH (64 aa). A substrate-binding site is contributed by H167. Residue I217 participates in Ca(2+) binding. 220-223 contacts substrate; it reads NLFD. D226 lines the Ca(2+) pocket. The tract at residues 230–433 is A2; it reads QNPVIDRYLK…LRRNNPALAY (204 aa). R254 is a binding site for substrate. Residue D256 is the Nucleophile of the active site. 259–260 contacts substrate; sequence KH. A Ca(2+)-binding site is contributed by H260. Residue E284 is the Proton donor of the active site. Positions 354, 398, and 402 each coordinate substrate. Positions 434–522 are c; the sequence is GDTEQRWING…EVGVWAYSAT (89 aa). Positions 523 to 606 are d; sequence ESTPIIGHVG…SAAYDNFEVL (84 aa). Positions 526–604 constitute an IPT/TIG domain; the sequence is PIIGHVGPMM…QTSAAYDNFE (79 aa). The CBM20 domain occupies 605–711; sequence VLTNDQVSVR…TGKIIVDWQN (107 aa). The segment at 607–711 is e; that stretch reads TNDQVSVRFV…TGKIIVDWQN (105 aa).

It belongs to the glycosyl hydrolase 13 family. As to quaternary structure, monomer. It depends on Ca(2+) as a cofactor.

It is found in the secreted. The catalysed reaction is Cyclizes part of a (1-&gt;4)-alpha-D-glucan chain by formation of a (1-&gt;4)-alpha-D-glucosidic bond.. The chain is Cyclomaltodextrin glucanotransferase (cgt) from Geobacillus stearothermophilus (Bacillus stearothermophilus).